The sequence spans 1017 residues: Protein HIR2 (1017 aa).

7 WD repeats span residues 10–49 (YHNG…ELSK), 74–117 (CHKS…QLFP), 124–163 (SEVN…FQEL), 167–208 (CHEK…DDTS), 228–271 (PLNV…TNIE), 275–326 (GHDF…PITV), and 330–371 (AVQG…YTFS). Positions 417–561 (ISTTTSSSNT…APSDLPRSNS (145 aa)) are disordered. A compositionally biased stretch (acidic residues) spans 473-483 (LDDDIDGDGDD). Polar residues-rich tracts occupy residues 518–535 (SDST…VTTK) and 545–561 (LISS…RSNS).

It belongs to the WD repeat HIR1 family.

It localises to the nucleus. Its function is as follows. Required for replication-independent chromatin assembly and for the periodic repression of histone gene transcription during the cell cycle. This is Protein HIR2 (HIR2) from Candida albicans (strain SC5314 / ATCC MYA-2876) (Yeast).